A 242-amino-acid polypeptide reads, in one-letter code: Carboxy-S-adenosyl-L-methionine synthase (242 aa).

S-adenosyl-L-methionine-binding positions include Tyr-39, 64–66 (GCS), 89–90 (DN), 117–118 (DI), Asn-132, and Arg-199.

Belongs to the class I-like SAM-binding methyltransferase superfamily. Cx-SAM synthase family. As to quaternary structure, homodimer.

The enzyme catalyses prephenate + S-adenosyl-L-methionine = carboxy-S-adenosyl-L-methionine + 3-phenylpyruvate + H2O. Functionally, catalyzes the conversion of S-adenosyl-L-methionine (SAM) to carboxy-S-adenosyl-L-methionine (Cx-SAM). This chain is Carboxy-S-adenosyl-L-methionine synthase, found in Aliivibrio salmonicida (strain LFI1238) (Vibrio salmonicida (strain LFI1238)).